Reading from the N-terminus, the 1746-residue chain is Tenascin (1746 aa).

Residues 1–22 (MGVVTRLLVGTFLASLALPAQG) form the signal peptide. An involved in hexamer formation region spans residues 23-185 (GVLKKVIRHK…CEPGWKGPNC (163 aa)). N38 is a glycosylation site (N-linked (GlcNAc...) asparagine). 3 positions are modified to phosphoserine: S65, S70, and S72. A glycan (O-linked (Xyl...) (chondroitin sulfate) serine) is linked at S72. Residues 118-145 (DVKELLSRLEELENLVSSLREQCTSGAG) are a coiled coil. N-linked (GlcNAc...) asparagine glycans are attached at residues N166 and N184. The region spanning 174–186 (CVCEPGWKGPNCS) is the EGF-like 1; incomplete domain. 14 EGF-like domains span residues 187–217 (EPEC…EDCS), 218–249 (QLAC…DCSR), 250–280 (ETCP…EDCN), 281–311 (EPLC…EDCG), 312–342 (ELIC…EDCG), 343–373 (RLAC…ADCS), 374–404 (ERRC…EDCG), 405–435 (ELRC…EDCS), 436–466 (QLRC…YDCS), 467–497 (EMSC…EDCR), 498–528 (ELRC…PDCA), 529–559 (DLAC…KDCG), 560–589 (QRRC…GLDC), and 590–620 (GQRS…GEDC). Intrachain disulfides connect C190–C200, C194–C205, C207–C216, C221–C231, C225–C236, C238–C247, C252–C263, C256–C268, C270–C279, C284–C294, C288–C299, C301–C310, C315–C325, C319–C330, C332–C341, C346–C356, C350–C361, C363–C372, C377–C387, C381–C392, C394–C403, C408–C418, C412–C423, C425–C434, C439–C449, C443–C454, C456–C465, C470–C480, C474–C485, C487–C496, C501–C511, C505–C516, C518–C527, C532–C542, C536–C547, C549–C558, C563–C573, C567–C578, C580–C589, C594–C604, C598–C609, and C611–C620. N327 is a glycosylation site (N-linked (GlcNAc...) asparagine). 10 consecutive Fibronectin type-III domains span residues 625–717 (PPKD…TPEG), 718–801 (LKFK…VTTT), 805–894 (APSQ…TGLD), 895–988 (APRN…LDPP), 989–1075 (KDFR…AGEP), 1076–1166 (EIGN…EAEP), 1167–1256 (EVDN…TAMG), 1257–1346 (SPKE…ALDG), 1347–1433 (PSGL…TDLD), and 1434–1522 (SPRD…IGLL). An N-linked (GlcNAc...) asparagine glycan is attached at N788. T905 carries the phosphothreonine modification. 3 N-linked (GlcNAc...) asparagine glycosylation sites follow: N1034, N1079, and N1121. N-linked (GlcNAc...) asparagine glycosylation is present at N1354. One can recognise a Fibrinogen C-terminal domain in the interval 1520–1735 (GLLYPFPRDC…FAEMKLRPSN (216 aa)).

This sequence belongs to the tenascin family. In terms of assembly, homohexamer; disulfide-linked. A homotrimer may be formed in the triple coiled-coil region and may be stabilized by disulfide rings at both ends. Two of such half-hexabrachions may be disulfide linked within the central globule. Interacts with CSPG4. Interacts (via the 3rd fibronectin type-III domain) with integrin ITGA9:ITGB1. In terms of tissue distribution, submaxillary glands and brain.

Its subcellular location is the secreted. It localises to the extracellular space. It is found in the extracellular matrix. In terms of biological role, extracellular matrix protein implicated in guidance of migrating neurons as well as axons during development, synaptic plasticity as well as neuronal regeneration. Promotes neurite outgrowth from cortical neurons grown on a monolayer of astrocytes. Ligand for integrins alpha-8/beta-1, alpha-9/beta-1, alpha-V/beta-3 and alpha-V/beta-6. In tumors, stimulates angiogenesis by elongation, migration and sprouting of endothelial cells. This Sus scrofa (Pig) protein is Tenascin (TNC).